Reading from the N-terminus, the 303-residue chain is Methionyl-tRNA formyltransferase (303 aa).

109–112 (SLLP) is a (6S)-5,6,7,8-tetrahydrofolate binding site.

This sequence belongs to the Fmt family.

It carries out the reaction L-methionyl-tRNA(fMet) + (6R)-10-formyltetrahydrofolate = N-formyl-L-methionyl-tRNA(fMet) + (6S)-5,6,7,8-tetrahydrofolate + H(+). Attaches a formyl group to the free amino group of methionyl-tRNA(fMet). The formyl group appears to play a dual role in the initiator identity of N-formylmethionyl-tRNA by promoting its recognition by IF2 and preventing the misappropriation of this tRNA by the elongation apparatus. The chain is Methionyl-tRNA formyltransferase from Helicobacter pylori (strain ATCC 700392 / 26695) (Campylobacter pylori).